Consider the following 142-residue polypeptide: Large ribosomal subunit protein uL13 (142 aa).

Belongs to the universal ribosomal protein uL13 family. Part of the 50S ribosomal subunit.

Its function is as follows. This protein is one of the early assembly proteins of the 50S ribosomal subunit, although it is not seen to bind rRNA by itself. It is important during the early stages of 50S assembly. The protein is Large ribosomal subunit protein uL13 of Acidovorax sp. (strain JS42).